Consider the following 89-residue polypeptide: Porphobilinogen deaminase (89 aa).

Belongs to the HMBS family. In terms of assembly, monomer. The cofactor is dipyrromethane.

The catalysed reaction is 4 porphobilinogen + H2O = hydroxymethylbilane + 4 NH4(+). It functions in the pathway porphyrin-containing compound metabolism; protoporphyrin-IX biosynthesis; coproporphyrinogen-III from 5-aminolevulinate: step 2/4. Functionally, tetrapolymerization of the monopyrrole PBG into the hydroxymethylbilane pre-uroporphyrinogen in several discrete steps. The chain is Porphobilinogen deaminase (hemC) from Dickeya chrysanthemi (Pectobacterium chrysanthemi).